The sequence spans 388 residues: S-adenosylmethionine synthase (388 aa).

His16 lines the ATP pocket. Asp18 is a Mg(2+) binding site. Glu44 contributes to the K(+) binding site. Residues Glu57 and Gln100 each coordinate L-methionine. Residues 100–110 (QSPDIAQGVDK) are flexible loop. Residues 167–169 (DAK), 233–234 (RF), Asp242, 248–249 (RK), Ala265, and Lys269 each bind ATP. An L-methionine-binding site is contributed by Asp242. Lys273 contributes to the L-methionine binding site.

It belongs to the AdoMet synthase family. As to quaternary structure, homotetramer; dimer of dimers. The cofactor is Mg(2+). K(+) serves as cofactor.

The protein localises to the cytoplasm. It catalyses the reaction L-methionine + ATP + H2O = S-adenosyl-L-methionine + phosphate + diphosphate. Its pathway is amino-acid biosynthesis; S-adenosyl-L-methionine biosynthesis; S-adenosyl-L-methionine from L-methionine: step 1/1. Functionally, catalyzes the formation of S-adenosylmethionine (AdoMet) from methionine and ATP. The overall synthetic reaction is composed of two sequential steps, AdoMet formation and the subsequent tripolyphosphate hydrolysis which occurs prior to release of AdoMet from the enzyme. The polypeptide is S-adenosylmethionine synthase (Polynucleobacter asymbioticus (strain DSM 18221 / CIP 109841 / QLW-P1DMWA-1) (Polynucleobacter necessarius subsp. asymbioticus)).